Here is a 295-residue protein sequence, read N- to C-terminus: Structure-specific endonuclease subunit SLX1 (295 aa).

Residues 11-93 (EFYGVYILQS…QHPKTSRHMA (83 aa)) enclose the GIY-YIG domain. Residues 85-133 (HPKTSRHMAGGGGSVTATAETAKSAPVAGKSDATSPAKNRRNAAPVARS) form a disordered region. The SLX1-type zinc finger occupies 205–272 (CCLCSDAIDY…IPSDVSCSQC (68 aa)).

The protein belongs to the SLX1 family. Forms a heterodimer with SLX4. It depends on a divalent metal cation as a cofactor.

The protein localises to the nucleus. Functionally, catalytic subunit of the SLX1-SLX4 structure-specific endonuclease that resolves DNA secondary structures generated during DNA repair and recombination. Has endonuclease activity towards branched DNA substrates, introducing single-strand cuts in duplex DNA close to junctions with ss-DNA. This is Structure-specific endonuclease subunit SLX1 from Meyerozyma guilliermondii (strain ATCC 6260 / CBS 566 / DSM 6381 / JCM 1539 / NBRC 10279 / NRRL Y-324) (Yeast).